Reading from the N-terminus, the 232-residue chain is MAKLSKRAAAIAQKIDRTKLYPVGEALNLVKETATAKFDESIDVAVQLGIDPKKSDQLVRGSVVLPAGTGKTVRVAVFAQGEKADAARAAGADIVGLDDLAEQIKAGQMDFDVVIASPDTMRVVGALGQVLGPRGLMPNPKVGTVTPDVATAVKNAKAGQIQYRTDKAGIIHATIGRASFGVEQLQNNLAALVDALQKARPAAAKGIYLRKLAVSSTMGGGARVEIASLSAN.

Belongs to the universal ribosomal protein uL1 family. Part of the 50S ribosomal subunit.

In terms of biological role, binds directly to 23S rRNA. The L1 stalk is quite mobile in the ribosome, and is involved in E site tRNA release. Its function is as follows. Protein L1 is also a translational repressor protein, it controls the translation of the L11 operon by binding to its mRNA. The chain is Large ribosomal subunit protein uL1 from Bordetella bronchiseptica (strain ATCC BAA-588 / NCTC 13252 / RB50) (Alcaligenes bronchisepticus).